A 77-amino-acid chain; its full sequence is MGDLSNKAEGVGGKIKEGIGEATGNESLADEGRADQTKADIKEAVSDAGDKIKDGANKVLGSFQDKDPDVEHPEAVN.

The disordered stretch occupies residues 1-77 (MGDLSNKAEG…PDVEHPEAVN (77 aa)). 2 stretches are compositionally biased toward basic and acidic residues: residues 30–56 (DEGRADQTKADIKEAVSDAGDKIKDGA) and 64–77 (QDKDPDVEHPEAVN).

It belongs to the UPF0337 (CsbD) family.

This is UPF0337 protein CE0198 from Corynebacterium efficiens (strain DSM 44549 / YS-314 / AJ 12310 / JCM 11189 / NBRC 100395).